The chain runs to 319 residues: tRNA pseudouridine synthase B (319 aa).

The Nucleophile role is filled by Asp49.

It belongs to the pseudouridine synthase TruB family. Type 1 subfamily.

It catalyses the reaction uridine(55) in tRNA = pseudouridine(55) in tRNA. In terms of biological role, responsible for synthesis of pseudouridine from uracil-55 in the psi GC loop of transfer RNAs. The chain is tRNA pseudouridine synthase B from Aeromonas salmonicida (strain A449).